Reading from the N-terminus, the 536-residue chain is Pre-mRNA-splicing factor SLU7 (536 aa).

The segment at 22–42 (EARKAGLAPAEVDEDGKEINP) is disordered. The CCHC-type zinc-finger motif lies at 94 to 111 (GACENCGAMTHDKKSCME). Residues 178 to 201 (KLEEKDGEEGDENVASEEEDEEDG) form a disordered region. A compositionally biased stretch (acidic residues) spans 182–200 (KDGEEGDENVASEEEDEED).

It belongs to the SLU7 family.

The protein localises to the nucleus. Functionally, participates in the second catalytic step of pre-mRNA splicing, when the free hydroxyl group of exon I attacks the 3'-splice site to generate spliced mRNA and the excised lariat intron. The polypeptide is Pre-mRNA-splicing factor SLU7 (Oryza sativa subsp. indica (Rice)).